A 445-amino-acid chain; its full sequence is Mitochondrial-processing peptidase subunit alpha-2 (445 aa).

The transit peptide at 1–13 (MIGRFIARNYTTS) directs the protein to the mitochondrion.

The protein belongs to the peptidase M16 family. In terms of assembly, heterodimer of alpha and beta subunits, forming the mitochondrial processing protease (MPP) in which subunit alpha is involved in substrate recognition and binding and subunit beta is the catalytic subunit.

The protein localises to the mitochondrion matrix. In terms of biological role, substrate recognition and binding subunit of the essential mitochondrial processing protease (MPP), which cleaves the mitochondrial sequence off newly imported precursors proteins. The polypeptide is Mitochondrial-processing peptidase subunit alpha-2 (mppA2) (Dictyostelium discoideum (Social amoeba)).